The following is a 63-amino-acid chain: Large ribosomal subunit protein bL35 (63 aa).

It belongs to the bacterial ribosomal protein bL35 family.

This chain is Large ribosomal subunit protein bL35, found in Campylobacter jejuni subsp. doylei (strain ATCC BAA-1458 / RM4099 / 269.97).